A 376-amino-acid polypeptide reads, in one-letter code: tRNA-specific 2-thiouridylase MnmA (376 aa).

Residues 9–16 (AMSGGIDS) and methionine 35 each bind ATP. Cysteine 105 (nucleophile) is an active-site residue. The cysteines at positions 105 and 202 are disulfide-linked. An ATP-binding site is contributed by glycine 129. An interaction with tRNA region spans residues 151–153 (KDQ). Catalysis depends on cysteine 202, which acts as the Cysteine persulfide intermediate. Positions 312–313 (RY) are interaction with tRNA.

The protein belongs to the MnmA/TRMU family.

It localises to the cytoplasm. It catalyses the reaction S-sulfanyl-L-cysteinyl-[protein] + uridine(34) in tRNA + AH2 + ATP = 2-thiouridine(34) in tRNA + L-cysteinyl-[protein] + A + AMP + diphosphate + H(+). Its function is as follows. Catalyzes the 2-thiolation of uridine at the wobble position (U34) of tRNA, leading to the formation of s(2)U34. This is tRNA-specific 2-thiouridylase MnmA from Amoebophilus asiaticus (strain 5a2).